Reading from the N-terminus, the 209-residue chain is Chloramphenicol acetyltransferase (209 aa).

The active-site Proton acceptor is His189.

It belongs to the chloramphenicol acetyltransferase family. In terms of assembly, homotrimer.

The enzyme catalyses chloramphenicol + acetyl-CoA = chloramphenicol 3-acetate + CoA. Its function is as follows. This enzyme is an effector of chloramphenicol resistance in bacteria. The polypeptide is Chloramphenicol acetyltransferase (Staphylococcus aureus).